The sequence spans 350 residues: Phenylalanine--tRNA ligase alpha subunit (350 aa).

Position 260 (E260) interacts with Mg(2+).

This sequence belongs to the class-II aminoacyl-tRNA synthetase family. Phe-tRNA synthetase alpha subunit type 1 subfamily. As to quaternary structure, tetramer of two alpha and two beta subunits. Requires Mg(2+) as cofactor.

It is found in the cytoplasm. The enzyme catalyses tRNA(Phe) + L-phenylalanine + ATP = L-phenylalanyl-tRNA(Phe) + AMP + diphosphate + H(+). The chain is Phenylalanine--tRNA ligase alpha subunit from Mesoplasma florum (strain ATCC 33453 / NBRC 100688 / NCTC 11704 / L1) (Acholeplasma florum).